Consider the following 1347-residue polypeptide: Serine-aspartate repeat-containing protein D (1347 aa).

Residues 1–35 (MLNRENKTAITRKGMVSNRLNKFSIRKYTVGTASI) form the signal peptide. The short motif at 23–34 (FSIRKYTVGTAS) is the YSIRK-G/S signaling motif element. Positions 36–568 (LVGTTLIFGL…NNQSGGAGQE (533 aa)) are ligand binding A region. The interval 55 to 185 (STNKELNEAT…NKKVDAKTES (131 aa)) is disordered. Composition is skewed to polar residues over residues 62 to 71 (EATTSASDNQ) and 94 to 109 (EMVS…NGNK). A compositionally biased stretch (basic and acidic residues) spans 130–145 (KSDEQASPKSTNEDLN). Composition is skewed to polar residues over residues 146–155 (TKQTISNQEA) and 163–173 (NKSVVNAQPTN). Over residues 174–183 (EENKKVDAKT) the composition is skewed to basic and acidic residues. 5 consecutive CNA-B domains span residues 569 to 680 (VYKI…IYKP), 681 to 791 (KYNL…YKTP), 792 to 901 (KYNL…FYKP), 902 to 1012 (TYNL…YKTS), and 1013 to 1123 (KYSL…EEDT). Disordered stretches follow at residues 857 to 883 (ETPS…TSTT), 972 to 992 (YTPT…GLTT), and 1078 to 1323 (EKPA…SNNA). Polar residues-rich tracts occupy residues 860–869 (SGYTPTQVGS) and 972–981 (YTPTSVTSGN). 2 stretches are compositionally biased toward acidic residues: residues 1091–1101 (TEDDKDADGGE) and 1118–1286 (YFEE…DSDS). The LPXTG sorting signal motif lies at 1310–1314 (LPETG). Thr-1313 bears the Pentaglycyl murein peptidoglycan amidated threonine mark. Residues 1314 to 1347 (GNENSGSNNATLFGGLFAALGSLLLFGRRKKQNK) constitute a propeptide, removed by sortase.

This sequence belongs to the serine-aspartate repeat-containing protein (SDr) family. As to quaternary structure, interacts with host DSG1; this interaction increases S.aureus adherence to keratinocytes.

It localises to the secreted. The protein localises to the cell wall. Its function is as follows. Cell surface-associated calcium-binding protein which plays an important role in adhesion and pathogenesis. Mediates interactions with components of the extracellular matrix such as host DSG1 to promote bacterial adhesion to host cells. Contributes to the resistance to killing by innate immune components such as neutrophils present in blood and thus attenuates bacterial clearance. The chain is Serine-aspartate repeat-containing protein D (sdrD) from Staphylococcus aureus (strain MW2).